Reading from the N-terminus, the 66-residue chain is Large ribosomal subunit protein bL35 (66 aa).

Residues 1 to 22 (MAYKLKSHRGAAKRFKKTASGG) form a disordered region.

The protein belongs to the bacterial ribosomal protein bL35 family.

The chain is Large ribosomal subunit protein bL35 from Pseudoalteromonas translucida (strain TAC 125).